The sequence spans 247 residues: Type II restriction enzyme SmaI (247 aa).

Requires Mg(2+) as cofactor. The cofactor is K(+).

The catalysed reaction is Endonucleolytic cleavage of DNA to give specific double-stranded fragments with terminal 5'-phosphates.. In terms of biological role, a P subtype restriction enzyme that recognizes the double-stranded sequence 5'-CCCGGG-3' and cleaves after C-3. This Serratia marcescens protein is Type II restriction enzyme SmaI (smaIR).